The following is a 217-amino-acid chain: Membrane-associated progesterone receptor component 2 (217 aa).

An O-linked (Xyl...) (chondroitin sulfate) serine glycan is attached at Ser15. A helical membrane pass occupies residues 40–62 (ALLATGGEMLLNVALVALVLLGA). Phosphoserine occurs at positions 84, 98, and 202. The region spanning 96-195 (DFSLEQLRQY…EKYDYVGRLL (100 aa)) is the Cytochrome b5 heme-binding domain. The segment at 196 to 217 (KPGEEPSEYTDEEDTKDHSKQD) is disordered. A compositionally biased stretch (acidic residues) spans 200–209 (EPSEYTDEED). Position 204 is a phosphotyrosine (Tyr204). Thr205 is subject to Phosphothreonine.

Belongs to the cytochrome b5 family. MAPR subfamily. In terms of assembly, interacts with PGRMC1. Interacts with AAAS.

It is found in the membrane. The protein localises to the nucleus envelope. Its subcellular location is the endoplasmic reticulum. It localises to the secreted. Required for the maintenance of uterine histoarchitecture and normal female reproductive lifespan. May serve as a universal non-classical progesterone receptor in the uterus. Intracellular heme chaperone required for delivery of labile, or signaling heme, to the nucleus. Plays a role in adipocyte function and systemic glucose homeostasis. In brown fat, which has a high demand for heme, delivery of labile heme in the nucleus regulates the activity of heme-responsive transcriptional repressors such as NR1D1 and BACH1. This Rattus norvegicus (Rat) protein is Membrane-associated progesterone receptor component 2.